Consider the following 666-residue polypeptide: MSYSDSDSSSHGGEYKNFRQITRERLLYEMLRSAKTGSSKSTWKVLIMDKLTVKIMSYACKMADITQEGVSLVEDIFRRRQPLPSMDAIYFIQPTKENVIMFLSDMSGKSPLYKKAFVFFSSPVSKELVGHIKKDSSVLPRIGALREMNLEFFAIDSQGFITDHERALEDLFGDEETSRKGDACLNVMASRIATVFASLREFPAVRYRAAKSLDASTMTTLRDLIPTKLAAGIWNCLAKHKQSIENFPQTETCELLILDRSIDQIAPVIHEWTYDAMCHDLLNMEGNKYVHVIPSKSGGQPEKKDVLLEEHDPIWLELRHAHIADASERLHDKMTNFLSKNKAAQLQGKRDGAELSTRDLQKMVQALPQYSEQIDKLSLHVEIARKLNDLIREQGLRELGQLEQDLVFGDAGMKDVIKYLSTQEEASREGKLRLLMILATIYPEKFEGEKGQNLMKLAKLSSDDMTAVNNMSLLGSAVDAKKNTPGGFTLKFDLHKKKRAVRKERQEEAAWQLSRFYPMIEELIEKLSKGELPKEDFPCMNDPSPSFHGSTSLSSAASSSQGQAAQSMRSRRTPTWAKPRGSDDGYSSDSVLRHASSDFRKMGQRIFVFIVGGATRSELKVCHKLSTKLKREVILGSTSLDDPPQFITKLKLLTANDDLSLDDLQI.

A coiled-coil region spans residues 340–377 (KNKAAQLQGKRDGAELSTRDLQKMVQALPQYSEQIDKL). The disordered stretch occupies residues 534 to 589 (KEDFPCMNDPSPSFHGSTSLSSAASSSQGQAAQSMRSRRTPTWAKPRGSDDGYSSD). Low complexity predominate over residues 550 to 568 (STSLSSAASSSQGQAAQSM).

This sequence belongs to the STXBP/unc-18/SEC1 family. In terms of assembly, binds the syntaxin KNOLLE. Interacts with SEC6. As to expression, expressed throughout the plant, both in mitotically active and quiescent cells. Enriched in dividing tissues.

Its subcellular location is the cytoplasm. The protein localises to the membrane. It is found in the cytoskeleton. The protein resides in the phragmoplast. Its function is as follows. Regulator of vesicle trafficking involved in cytokinesis and root hair development, but not required for cell elongation. The protein is SNARE-interacting protein KEULE (KEU) of Arabidopsis thaliana (Mouse-ear cress).